We begin with the raw amino-acid sequence, 244 residues long: NAD-dependent protein deacetylase (244 aa).

Positions 1-244 (MSATERQLQY…IGDTCRQLRA (244 aa)) constitute a Deacetylase sirtuin-type domain. Ala-27, Thr-31, Phe-38, Arg-39, Gln-107, Ile-109, Asp-110, and His-125 together coordinate NAD(+). Residue Phe-38 coordinates nicotinamide. Positions 109 and 110 each coordinate nicotinamide. Catalysis depends on His-125, which acts as the Proton acceptor. The Zn(2+) site is built by Cys-133, Cys-136, Cys-153, and Cys-156. Residues Ser-192, Ser-193, Asn-217, and Ile-235 each coordinate NAD(+).

Belongs to the sirtuin family. Class U subfamily. It depends on Zn(2+) as a cofactor.

The protein resides in the cytoplasm. It catalyses the reaction N(6)-acetyl-L-lysyl-[protein] + NAD(+) + H2O = 2''-O-acetyl-ADP-D-ribose + nicotinamide + L-lysyl-[protein]. In terms of biological role, NAD-dependent protein deacetylase which modulates the activities of several enzymes which are inactive in their acetylated form. This is NAD-dependent protein deacetylase from Chromobacterium violaceum (strain ATCC 12472 / DSM 30191 / JCM 1249 / CCUG 213 / NBRC 12614 / NCIMB 9131 / NCTC 9757 / MK).